The following is a 2397-amino-acid chain: Cell wall alpha-1,3-glucan synthase mok11 (2397 aa).

Residues 1683–1705 (SNQQSFDFKSSESDSFPQKSPSV) are disordered. Residues 1687 to 1698 (SFDFKSSESDSF) show a composition bias toward low complexity.

Belongs to the glycosyltransferase group 1 family.

It carries out the reaction [(1-&gt;3)-alpha-D-glucosyl](n) + UDP-alpha-D-glucose = [(1-&gt;3)-alpha-D-glucosyl](n+1) + UDP + H(+). This is Cell wall alpha-1,3-glucan synthase mok11 (mok11) from Schizosaccharomyces pombe (strain 972 / ATCC 24843) (Fission yeast).